Reading from the N-terminus, the 518-residue chain is Sensory neuron membrane protein 1 (518 aa).

Over 1 to 8 (MKTAEKLG) the chain is Cytoplasmic. A helical membrane pass occupies residues 9 to 29 (IIGTTISIFGIGFGWGVFPWL). The Extracellular segment spans residues 30-456 (IRMQIGRVSL…ELFRILQFLD (427 aa)). N-linked (GlcNAc...) asparagine glycans are attached at residues Asn-64, Asn-186, Asn-225, Asn-316, Asn-334, and Asn-381. 3 disulfide bridges follow: Cys-265–Cys-330, Cys-294–Cys-349, and Cys-332–Cys-338. Residues 457–477 (VIKWVITLFGAGVVSGGVGLY) traverse the membrane as a helical segment. Residues 478–518 (YKEKNSLPITPTSSATSKKIDNPTDKTTTHELGHTNFGYIN) lie on the Cytoplasmic side of the membrane.

It belongs to the CD36 family.

The protein resides in the cell membrane. In terms of biological role, plays an olfactory role that is not restricted to pheromone sensitivity. The protein is Sensory neuron membrane protein 1 of Pediculus humanus subsp. corporis (Body louse).